Consider the following 222-residue polypeptide: Sigma non-opioid intracellular receptor 1 (222 aa).

Residues Met1 to Thr6 lie on the Lumenal side of the membrane. The helical transmembrane segment at Ile7 to Ala29 threads the bilayer. The Cytoplasmic portion of the chain corresponds to Asn30–Leu222. Residues Ser97–Leu104 form an important for ligand-binding region. The segment at Phe175–Leu222 is C-terminal hydrophobic region.

It belongs to the ERG2 family. Homotrimer.

It localises to the nucleus inner membrane. The protein resides in the nucleus outer membrane. The protein localises to the nucleus envelope. Its subcellular location is the cytoplasmic vesicle. It is found in the endoplasmic reticulum membrane. It localises to the membrane. Functionally, may function in lipid transport from the endoplasmic reticulum and be involved in a wide array of cellular functions probably through regulation of the biogenesis of lipid microdomains at the plasma membrane. May regulate calcium efflux at the endoplasmic reticulum. The chain is Sigma non-opioid intracellular receptor 1 (sigmar1) from Danio rerio (Zebrafish).